Here is a 341-residue protein sequence, read N- to C-terminus: NADH-ubiquinone oxidoreductase chain 2 (341 aa).

Transmembrane regions (helical) follow at residues 8–28 (IFLIMLIFGTLVTISSNSWLG), 61–81 (FLTQAFASSILLFAIIMLMFL), 95–115 (ILILSTLLLKSGAAPFHFWFP), 145–165 (FIYNFFMISIILSMLIGSLGG), 174–191 (LMAFSSINHLGWMLLAMM), 195–215 (MLWMTYFLMYSLLSFSIVLMF), 238–258 (LLIFLNLLSLGGLPPFLGFLP), 272–292 (LFILTISVCLTLITLYFYLRL), and 321–341 (LIFNFISIGGLVMISMIYIIM).

The protein belongs to the complex I subunit 2 family.

It is found in the mitochondrion inner membrane. It catalyses the reaction a ubiquinone + NADH + 5 H(+)(in) = a ubiquinol + NAD(+) + 4 H(+)(out). In terms of biological role, core subunit of the mitochondrial membrane respiratory chain NADH dehydrogenase (Complex I) that is believed to belong to the minimal assembly required for catalysis. Complex I functions in the transfer of electrons from NADH to the respiratory chain. The immediate electron acceptor for the enzyme is believed to be ubiquinone. The polypeptide is NADH-ubiquinone oxidoreductase chain 2 (mt:ND2) (Anopheles gambiae (African malaria mosquito)).